The sequence spans 253 residues: Large ribosomal subunit protein uL4 (253 aa).

Residues Ser78–Thr107 form a disordered region. Residues Arg82–Pro94 show a composition bias toward basic residues. The segment covering Pro95 to Thr107 has biased composition (basic and acidic residues).

The protein belongs to the universal ribosomal protein uL4 family. As to quaternary structure, part of the 50S ribosomal subunit.

One of the primary rRNA binding proteins, this protein initially binds near the 5'-end of the 23S rRNA. It is important during the early stages of 50S assembly. It makes multiple contacts with different domains of the 23S rRNA in the assembled 50S subunit and ribosome. In terms of biological role, forms part of the polypeptide exit tunnel. In Methanosarcina acetivorans (strain ATCC 35395 / DSM 2834 / JCM 12185 / C2A), this protein is Large ribosomal subunit protein uL4.